Here is a 295-residue protein sequence, read N- to C-terminus: UDP-N-acetylenolpyruvoylglucosamine reductase (295 aa).

One can recognise an FAD-binding PCMH-type domain in the interval 26–189 (VGGRADILFK…VEAEFKGVNS (164 aa)). Residue Arg-169 is part of the active site. The active-site Proton donor is Cys-218. The active site involves Glu-288.

Belongs to the MurB family. FAD is required as a cofactor.

The protein resides in the cytoplasm. The enzyme catalyses UDP-N-acetyl-alpha-D-muramate + NADP(+) = UDP-N-acetyl-3-O-(1-carboxyvinyl)-alpha-D-glucosamine + NADPH + H(+). It functions in the pathway cell wall biogenesis; peptidoglycan biosynthesis. Its function is as follows. Cell wall formation. The protein is UDP-N-acetylenolpyruvoylglucosamine reductase of Wolbachia sp. subsp. Drosophila simulans (strain wRi).